A 908-amino-acid chain; its full sequence is Glutamate receptor ionotropic, kainate 2 (908 aa).

Residues 1 to 31 (MKIISPVLSNLVFSRSIKVLLCLLWIGYSQG) form the signal peptide. Topologically, residues 32–561 (TTHVLRFGGI…VFSFLNPLSP (530 aa)) are extracellular. 7 N-linked (GlcNAc...) asparagine glycosylation sites follow: N67, N73, N275, N378, N412, N423, and N430. The cysteines at positions 96 and 347 are disulfide-linked. P516, A518, and R523 together coordinate L-glutamate. N-linked (GlcNAc...) asparagine glycosylation occurs at N546. The chain crosses the membrane as a helical span at residues 562–582 (DIWMYILLAYLGVSCVLFVIA). Topologically, residues 583–638 (RFSPYEWYNPHPCNPDSDVVENNFTLLNSFWFGVGALMQQGSELMPKALSTRIVGG) are cytoplasmic. The helical transmembrane segment at 639 to 659 (IWWFFTLIIISSYTANLAAFL) threads the bilayer. At 660–819 (TVERMESPID…KEASALGVQN (160 aa)) the chain is on the extracellular side. A689, T690, and E738 together coordinate L-glutamate. A disulfide bridge links C750 with C804. N751 is a glycosylation site (N-linked (GlcNAc...) asparagine). A helical transmembrane segment spans residues 820 to 840 (IGGIFIVLAAGLVLSVFVAVG). The Cytoplasmic portion of the chain corresponds to 841 to 908 (EFLYKSKKNA…RRLPGKETMA (68 aa)). Phosphoserine; by PKC is present on residues S846 and S868. A Glycyl lysine isopeptide (Lys-Gly) (interchain with G-Cter in SUMO1) cross-link involves residue K886.

The protein belongs to the glutamate-gated ion channel (TC 1.A.10.1) family. GRIK2 subfamily. In terms of assembly, homotetramer and heterotetramer with GRIK5. Tetramers may be formed by the dimerization of dimers. Assembles into a kainate-gated homomeric channel that does not bind AMPA. Can form functional heteromeric receptors with GRIK4 and GRIK5. Can form functional heteromeric receptors with GRIK3. Interacts with DLG4. Interacts with NETO2. Interacts (via C-terminus) with KLHL17 (via kelch repeats); the interaction targets GRIK2 for degradation via ubiquitin-proteasome pathway. Sumoylation mediates kainate receptor-mediated endocytosis and regulates synaptic transmission. Sumoylation is enhanced by PIAS3 and desumoylated by SENP1. Post-translationally, ubiquitinated. Ubiquitination regulates the GRIK2 levels at the synapse by leading kainate receptor degradation through proteasome. In terms of processing, phosphorylated by PKC at Ser-868 upon agonist activation, this directly enhance sumoylation. Highest expression is found in the olfactory lobe, piriform cortex, dentate gyrus, hippocampus, granular cell layer of the cerebellum, and in caudate-putamen.

It is found in the cell membrane. Its subcellular location is the postsynaptic cell membrane. It carries out the reaction Ca(2+)(in) = Ca(2+)(out). It catalyses the reaction Na(+)(in) = Na(+)(out). Cold receptor activity activated by temperatures between 10-19 degrees Celsius. Functionally, ionotropic glutamate receptor that functions as a cation-permeable ligand-gated ion channel, gated by L-glutamate and the glutamatergic agonist kainic acid. L-glutamate acts as an excitatory neurotransmitter at many synapses in the central nervous system. Binding of the excitatory neurotransmitter L-glutamate induces a conformation change, leading to the opening of the cation channel, and thereby converts the chemical signal to an electrical impulse. The receptor then desensitizes rapidly and enters a transient inactive state, characterized by the presence of bound agonist. Modulates cell surface expression of NETO2. In association with GRIK3, involved in presynaptic facilitation of glutamate release at hippocampal mossy fiber synapses. Its function is as follows. Independent of its ionotropic glutamate receptor activity, acts as a thermoreceptor conferring sensitivity to cold temperatures. Functions in dorsal root ganglion neurons. In Rattus norvegicus (Rat), this protein is Glutamate receptor ionotropic, kainate 2 (Grik2).